Here is a 436-residue protein sequence, read N- to C-terminus: 3-ketoacyl-CoA thiolase (436 aa).

C99 (acyl-thioester intermediate) is an active-site residue. Active-site proton acceptor residues include H392 and C422.

The protein belongs to the thiolase-like superfamily. Thiolase family. In terms of assembly, heterotetramer of two alpha chains (FadJ) and two beta chains (FadI).

Its subcellular location is the cytoplasm. It catalyses the reaction an acyl-CoA + acetyl-CoA = a 3-oxoacyl-CoA + CoA. It participates in lipid metabolism; fatty acid beta-oxidation. In terms of biological role, catalyzes the final step of fatty acid oxidation in which acetyl-CoA is released and the CoA ester of a fatty acid two carbons shorter is formed. The polypeptide is 3-ketoacyl-CoA thiolase (Escherichia coli O8 (strain IAI1)).